Reading from the N-terminus, the 281-residue chain is Energy-coupling factor transporter ATP-binding protein EcfA2 (281 aa).

The ABC transporter domain occupies 3–242; sequence IKVTGLTYVY…TETLEEIGLA (240 aa). Residue 40 to 47 participates in ATP binding; that stretch reads GHTGSGKS.

Belongs to the ABC transporter superfamily. Energy-coupling factor EcfA family. Forms a stable energy-coupling factor (ECF) transporter complex composed of 2 membrane-embedded substrate-binding proteins (S component), 2 ATP-binding proteins (A component) and 2 transmembrane proteins (T component).

It localises to the cell membrane. In terms of biological role, ATP-binding (A) component of a common energy-coupling factor (ECF) ABC-transporter complex. Unlike classic ABC transporters this ECF transporter provides the energy necessary to transport a number of different substrates. This is Energy-coupling factor transporter ATP-binding protein EcfA2 from Acetivibrio thermocellus (strain ATCC 27405 / DSM 1237 / JCM 9322 / NBRC 103400 / NCIMB 10682 / NRRL B-4536 / VPI 7372) (Clostridium thermocellum).